Reading from the N-terminus, the 103-residue chain is N(4)-acetylcytidine amidohydrolase (103 aa).

The ASCH domain occupies 6-94; it reads ITFFQRFQND…IAEIYPNQTQ (89 aa). The active-site Proton acceptor is Lys-21. Thr-24 acts as the Nucleophile in catalysis. The Proton donor role is filled by Glu-74.

Belongs to the N(4)-acetylcytidine amidohydrolase family.

The enzyme catalyses N(4)-acetylcytidine + H2O = cytidine + acetate + H(+). It carries out the reaction N(4)-acetyl-2'-deoxycytidine + H2O = 2'-deoxycytidine + acetate + H(+). It catalyses the reaction N(4)-acetylcytosine + H2O = cytosine + acetate + H(+). In terms of biological role, catalyzes the hydrolysis of N(4)-acetylcytidine (ac4C). The chain is N(4)-acetylcytidine amidohydrolase (yqfB) from Salmonella schwarzengrund (strain CVM19633).